A 241-amino-acid chain; its full sequence is Homeobox protein TGIF2LX (241 aa).

Disordered stretches follow at residues 1–58 (MEAA…GNLP) and 125–207 (KTGK…ELVS). The segment covering 10 to 39 (ETQSPVQKDSPAKTQSPAQDTSIMSRNNAD) has biased composition (polar residues). A DNA-binding region (homeobox; TALE-type) is located at residues 48 to 111 (EHKKKRKGNL…INARRRILPD (64 aa)).

It belongs to the TALE/TGIF homeobox family.

It is found in the nucleus. In terms of biological role, may have a transcription role in testis. The sequence is that of Homeobox protein TGIF2LX (TGIF2LX) from Pan troglodytes (Chimpanzee).